Consider the following 261-residue polypeptide: Imidazole glycerol phosphate synthase subunit HisF (261 aa).

Residues Asp12 and Asp131 contribute to the active site.

Belongs to the HisA/HisF family. Heterodimer of HisH and HisF.

The protein localises to the cytoplasm. It carries out the reaction 5-[(5-phospho-1-deoxy-D-ribulos-1-ylimino)methylamino]-1-(5-phospho-beta-D-ribosyl)imidazole-4-carboxamide + L-glutamine = D-erythro-1-(imidazol-4-yl)glycerol 3-phosphate + 5-amino-1-(5-phospho-beta-D-ribosyl)imidazole-4-carboxamide + L-glutamate + H(+). It participates in amino-acid biosynthesis; L-histidine biosynthesis; L-histidine from 5-phospho-alpha-D-ribose 1-diphosphate: step 5/9. Functionally, IGPS catalyzes the conversion of PRFAR and glutamine to IGP, AICAR and glutamate. The HisF subunit catalyzes the cyclization activity that produces IGP and AICAR from PRFAR using the ammonia provided by the HisH subunit. This is Imidazole glycerol phosphate synthase subunit HisF from Brucella melitensis biotype 2 (strain ATCC 23457).